Consider the following 1822-residue polypeptide: Sperm flagellar protein 2 (1822 aa).

The 105-residue stretch at 1 to 105 folds into the Calponin-homology (CH) domain; the sequence is MSEILCQWLN…LLYQLYIALQ (105 aa). Coiled-coil stretches lie at residues 227–260, 321–396, 732–758, and 871–909; these read KALE…KDLQ, AHEA…KQAK, NQAQ…KAQK, and CEKV…LAEL. Disordered stretches follow at residues 896–1004, 1278–1327, 1664–1718, and 1803–1822; these read KEAE…VPQP, EEEK…EATP, SIPS…NNEK, and EHVQ…EEKK. Residues 911–920 show a composition bias toward pro residues; the sequence is LPTPPPAPPP. 2 stretches are compositionally biased toward basic and acidic residues: residues 921-930 and 949-968; these read EPEKEKEIHQ and PHGK…ETAL. Over residues 975–987 the composition is skewed to low complexity; the sequence is KGKSSGGKVPVKK. Composition is skewed to basic and acidic residues over residues 1278–1292 and 1303–1314; these read EEEK…KEKS and KEPPKKKQEDKK. An interaction with IFT20 region spans residues 1324–1676; that stretch reads EATPVIVTTE…SAEKTSSTDA (353 aa). A coiled-coil region spans residues 1686 to 1712; it reads EENAAREERKLKDDTEKREQKDEEIPE. Positions 1688-1708 are enriched in basic and acidic residues; it reads NAAREERKLKDDTEKREQKDE.

As to quaternary structure, interacts (via C-terminus) with IFT20. Interacts with DYNC1I2.

The protein resides in the cell projection. Its subcellular location is the cilium. It localises to the flagellum. It is found in the cytoplasm. The protein localises to the golgi apparatus. Functionally, required for correct axoneme development in spermatozoa. Important for normal development of the manchette and sperm head morphology. Essential for male fertility. Plays a role in localization of the intraflagellar transport protein IFT20 to the manchette, suggesting function as an adapter for dynein-mediated protein transport during spermatogenesis. Also plays a role in bone growth where it seems to be required for normal osteoblast differentiation. The chain is Sperm flagellar protein 2 (SPEF2) from Homo sapiens (Human).